Reading from the N-terminus, the 439-residue chain is Cobyrinate a,c-diamide synthase (439 aa).

The GATase cobBQ-type domain maps to lysine 238–glutamate 431. Residue cysteine 320 is the Nucleophile of the active site.

It belongs to the CobB/CbiA family. The cofactor is Mg(2+).

The catalysed reaction is cob(II)yrinate + 2 L-glutamine + 2 ATP + 2 H2O = cob(II)yrinate a,c diamide + 2 L-glutamate + 2 ADP + 2 phosphate + 2 H(+). Its pathway is cofactor biosynthesis; adenosylcobalamin biosynthesis; cob(II)yrinate a,c-diamide from sirohydrochlorin (anaerobic route): step 10/10. Catalyzes the ATP-dependent amidation of the two carboxylate groups at positions a and c of cobyrinate, using either L-glutamine or ammonia as the nitrogen source. The chain is Cobyrinate a,c-diamide synthase from Clostridium tetani (strain Massachusetts / E88).